Consider the following 230-residue polypeptide: Cytidylate kinase (230 aa).

An ATP-binding site is contributed by 12-20 (GPSGAGKGT).

It belongs to the cytidylate kinase family. Type 1 subfamily.

The protein resides in the cytoplasm. It carries out the reaction CMP + ATP = CDP + ADP. The catalysed reaction is dCMP + ATP = dCDP + ADP. The protein is Cytidylate kinase of Shewanella halifaxensis (strain HAW-EB4).